An 833-amino-acid chain; its full sequence is MKVWGAHGEFCARHQWEVIVATLALLACAASVERNGPGNRSEHCAGWARACPGLEAEYQAADAVIMTFVRCAALLYAYYQISNLHKIASKYLLIIAGVFSTFASFIFTSAVASLFWSELASIKDAPFLFLLVADVARGARMAKAGWSAGEDQGKRVGRALALLGPTATLDTLLAVLLVGVGALSGVPRLEHMCTFACLALLVDYLVFVTFYPACLSLVADFASGRKEMSPDSPFSEADLKPNPVVQRVKMIMAAGLLCVHLTSRWPWSSDNGIIEGPTDTLTPTSNDNILLHSYVKWFSVSADYIVIATLLCALIIKFVFFEEQRNWVIDMNDMTVKEVVQEQARSKPKFSVGDDSNSEVSTQTEGVLEDEWPTLSPSSSAAKLNSKKRPMAECLEIYRSEGACVSLSDEEVVMLVEQSHIPLHRLEAVLGDPLRGVRLRRKVVGARFQTELAIKQLPYLNYDYSKVLNACCENVIGYVGVPVGYAGPLVVDGKPYMIPMATTEGALVASTNRGAKAIGIRGVTSVVEDVGMTRAPAIKLPNVVRAHECRQWIDNKDNYAVIKEAFDSTSRFARLQEIHIGVDGATLYLRFRATTGDAMGMNMVSKGAENALKLLKNYFPDMEVISLSGNYCSDKKAAAINWVKGRGKRVVCETTITSDSLRTIFKTDAKTLARCNKIKNLSGSALAGSIGGNNAHAANMVTAIYIATGQDPAQNVTSSNCSTNMEVCGENGEDLYVTCTMPSLEVGTVGGGTILTGQGACLDILGVKGAGARPAENSARLASLICATVLAGELSLMAALVNSDLVKSHMRHNRSTVNVQVQAENITLKVPTL.

4 consecutive transmembrane segments (helical) span residues 10 to 32 (FCAR…AASV), 91 to 117 (YLLI…LFWS), 160 to 180 (LALL…LVGV), and 301 to 321 (SADY…FVFF). The interval 322–419 (EEQRNWVIDM…EEVVMLVEQS (98 aa)) is linker. The tract at residues 347–374 (KPKFSVGDDSNSEVSTQTEGVLEDEWPT) is disordered. Over residues 354-365 (DDSNSEVSTQTE) the composition is skewed to polar residues. The tract at residues 420 to 833 (HIPLHRLEAV…ENITLKVPTL (414 aa)) is catalytic. Active-site charge relay system residues include Glu504 and Lys635. Asn680 is a glycosylation site (N-linked (GlcNAc...) asparagine). Asp711 functions as the Charge relay system in the catalytic mechanism. N-linked (GlcNAc...) asparagine glycans are attached at residues Asn715 and Asn720. Catalysis depends on His809, which acts as the Proton donor. N-linked (GlcNAc...) asparagine glycans are attached at residues Asn813 and Asn825.

Belongs to the HMG-CoA reductase family.

The protein resides in the endoplasmic reticulum membrane. It catalyses the reaction (R)-mevalonate + 2 NADP(+) + CoA = (3S)-3-hydroxy-3-methylglutaryl-CoA + 2 NADPH + 2 H(+). The protein operates within metabolic intermediate biosynthesis; (R)-mevalonate biosynthesis; (R)-mevalonate from acetyl-CoA: step 3/3. With respect to regulation, the activity of HMG-CoA-reductase is suppressed by exogenous mevalonate. Its function is as follows. Synthesis of mevalonate for the production of non-sterol isoprenoids, which are essential for growth differentiation. The polypeptide is 3-hydroxy-3-methylglutaryl-coenzyme A reductase (HMGR) (Agrotis ipsilon (Black cutworm moth)).